The chain runs to 1487 residues: Protein cft1 (1487 aa).

The span at 486–504 (DLDLDDEDLEDDDDDDLYG) shows a compositional bias: acidic residues. The interval 486–513 (DLDLDDEDLEDDDDDDLYGEESASPEQA) is disordered.

Belongs to the CFT1 family.

The protein localises to the nucleus. RNA-binding component of the cleavage and polyadenylation factor (CPF) complex, which plays a key role in polyadenylation-dependent pre-mRNA 3'-end formation and cooperates with cleavage factors including the CFIA complex and hrp1/CFIB. Involved in poly(A) site recognition. May be involved in coupling transcription termination and mRNA 3'-end formation. The sequence is that of Protein cft1 (paa-3) from Neurospora crassa (strain ATCC 24698 / 74-OR23-1A / CBS 708.71 / DSM 1257 / FGSC 987).